Here is a 139-residue protein sequence, read N- to C-terminus: FLYWCH family member 2 (139 aa).

2 disordered regions span residues 1 to 36 (MPQP…PRKP) and 86 to 139 (EAQR…STSP). Residues 98–107 (PEQKRSKQNL) show a composition bias toward basic and acidic residues. Low complexity predominate over residues 120-130 (VSSSSSEETTV).

The chain is FLYWCH family member 2 (Flywch2) from Mus musculus (Mouse).